Here is a 270-residue protein sequence, read N- to C-terminus: Aliphatic sulfonates import ATP-binding protein SsuB (270 aa).

An ABC transporter domain is found at 17–238; the sequence is LAANDLRRTF…VRGSHRLAAL (222 aa). An ATP-binding site is contributed by 49–56; that stretch reads GRSGCGKS. The tract at residues 250-270 is disordered; it reads PGTPPEPEPVAPLPTHLRWAH. Pro residues predominate over residues 251 to 261; the sequence is GTPPEPEPVAP.

This sequence belongs to the ABC transporter superfamily. Aliphatic sulfonates importer (TC 3.A.1.17.2) family. The complex is composed of two ATP-binding proteins (SsuB), two transmembrane proteins (SsuC) and a solute-binding protein (SsuA).

It localises to the cell inner membrane. The catalysed reaction is ATP + H2O + aliphatic sulfonate-[sulfonate-binding protein]Side 1 = ADP + phosphate + aliphatic sulfonateSide 2 + [sulfonate-binding protein]Side 1.. Its function is as follows. Part of the ABC transporter complex SsuABC involved in aliphatic sulfonates import. Responsible for energy coupling to the transport system. In Pseudomonas entomophila (strain L48), this protein is Aliphatic sulfonates import ATP-binding protein SsuB.